A 347-amino-acid chain; its full sequence is Molybdenum cofactor biosynthesis bifunctional protein (347 aa).

A molybdenum cofactor biosynthesis protein C region spans residues Met-1–Ser-158. Substrate contacts are provided by residues Phe-75–His-77 and Met-116–Glu-117. Catalysis depends on Asp-131, which acts as the For MoaC activity. The interval Gln-159–Asn-347 is molybdenum cofactor guanylyltransferase. GTP-binding positions include Leu-167–Gly-169, Lys-179, Asp-226, and Asp-255. Asp-255 contacts Mg(2+).

In the N-terminal section; belongs to the MoaC family. The protein in the C-terminal section; belongs to the MobA family. Mg(2+) serves as cofactor.

It localises to the cytoplasm. It catalyses the reaction Mo-molybdopterin + GTP + H(+) = Mo-molybdopterin guanine dinucleotide + diphosphate. The catalysed reaction is (8S)-3',8-cyclo-7,8-dihydroguanosine 5'-triphosphate = cyclic pyranopterin phosphate + diphosphate. Its pathway is cofactor biosynthesis; molybdopterin biosynthesis. In terms of biological role, catalyzes the conversion of (8S)-3',8-cyclo-7,8-dihydroguanosine 5'-triphosphate to cyclic pyranopterin monophosphate (cPMP). Its function is as follows. Transfers a GMP moiety from GTP to Mo-molybdopterin (Mo-MPT) cofactor (Moco or molybdenum cofactor) to form Mo-molybdopterin guanine dinucleotide (Mo-MGD) cofactor. The protein is Molybdenum cofactor biosynthesis bifunctional protein (moaC/mobA) of Synechocystis sp. (strain ATCC 27184 / PCC 6803 / Kazusa).